A 179-amino-acid polypeptide reads, in one-letter code: uncharacterized protein (179 aa).

This is an uncharacterized protein from Galliformes (FAdV-1).